Here is a 306-residue protein sequence, read N- to C-terminus: Ornithine carbamoyltransferase (306 aa).

Residues 53–56 (STRT), Q80, R104, and 131–134 (HPCQ) contribute to the carbamoyl phosphate site. L-ornithine contacts are provided by residues N162, D219, and 223–224 (SM). Carbamoyl phosphate-binding positions include 259 to 260 (CL) and R287.

This sequence belongs to the aspartate/ornithine carbamoyltransferase superfamily. OTCase family.

The protein resides in the cytoplasm. It catalyses the reaction carbamoyl phosphate + L-ornithine = L-citrulline + phosphate + H(+). It participates in amino-acid biosynthesis; L-arginine biosynthesis; L-arginine from L-ornithine and carbamoyl phosphate: step 1/3. Its function is as follows. Reversibly catalyzes the transfer of the carbamoyl group from carbamoyl phosphate (CP) to the N(epsilon) atom of ornithine (ORN) to produce L-citrulline. This Acinetobacter baumannii (strain ATCC 17978 / DSM 105126 / CIP 53.77 / LMG 1025 / NCDC KC755 / 5377) protein is Ornithine carbamoyltransferase.